The chain runs to 281 residues: 2-dehydro-3-deoxyphosphooctonate aldolase (281 aa).

Belongs to the KdsA family.

It is found in the cytoplasm. It catalyses the reaction D-arabinose 5-phosphate + phosphoenolpyruvate + H2O = 3-deoxy-alpha-D-manno-2-octulosonate-8-phosphate + phosphate. It participates in carbohydrate biosynthesis; 3-deoxy-D-manno-octulosonate biosynthesis; 3-deoxy-D-manno-octulosonate from D-ribulose 5-phosphate: step 2/3. Its pathway is bacterial outer membrane biogenesis; lipopolysaccharide biosynthesis. The protein is 2-dehydro-3-deoxyphosphooctonate aldolase of Janthinobacterium sp. (strain Marseille) (Minibacterium massiliensis).